The chain runs to 54 residues: uncharacterized protein (54 aa).

Residues 1–38 (MFPNSNGPNKMKALVAPSNSSTTSKTNNNNLPPNGRSS) form a disordered region. The segment covering 17–38 (PSNSSTTSKTNNNNLPPNGRSS) has biased composition (low complexity).

This is an uncharacterized protein from Dictyostelium discoideum (Social amoeba).